A 526-amino-acid chain; its full sequence is Amine oxidase [flavin-containing] A (526 aa).

The residue at position 1 (Met-1) is an N-acetylmethionine. Over 1–497 (MTDLEKPSIT…HTFLERNLPS (497 aa)) the chain is Cytoplasmic. Phosphoserine is present on Ser-383. Cys-406 is modified (S-8alpha-FAD cysteine). A helical; Anchor for type IV membrane protein membrane pass occupies residues 498–518 (VPGLLKITGFSTSVALLCFVL). Topologically, residues 519–526 (YKFKQPQS) are mitochondrial intermembrane. The tract at residues 520–522 (KFK) is interaction with membrane phospholipid headgroups.

The protein belongs to the flavin monoamine oxidase family. As to quaternary structure, monomer, homo- or heterodimer (containing two subunits of similar size). Each subunit contains a covalently bound flavin. Enzymatically active as monomer. Requires FAD as cofactor.

The protein localises to the mitochondrion outer membrane. It catalyses the reaction a secondary aliphatic amine + O2 + H2O = a primary amine + an aldehyde + H2O2. The catalysed reaction is a primary methyl amine + O2 + H2O = an aldehyde + H2O2 + NH4(+). The enzyme catalyses serotonin + O2 + H2O = (5-hydroxyindol-3-yl)acetaldehyde + H2O2 + NH4(+). It carries out the reaction (R)-adrenaline + O2 + H2O = (R)-3,4-dihydroxymandelaldehyde + methylamine + H2O2. It catalyses the reaction dopamine + O2 + H2O = 3,4-dihydroxyphenylacetaldehyde + H2O2 + NH4(+). The catalysed reaction is tyramine + O2 + H2O = (4-hydroxyphenyl)acetaldehyde + H2O2 + NH4(+). The enzyme catalyses (R)-noradrenaline + O2 + H2O = (R)-3,4-dihydroxymandelaldehyde + H2O2 + NH4(+). It carries out the reaction kynuramine + O2 + H2O = 3-(2-aminophenyl)-3-oxopropanal + H2O2 + NH4(+). It catalyses the reaction tryptamine + O2 + H2O = indole-3-acetaldehyde + H2O2 + NH4(+). The catalysed reaction is 2-phenylethylamine + O2 + H2O = 2-phenylacetaldehyde + H2O2 + NH4(+). Its function is as follows. Catalyzes the oxidative deamination of biogenic and xenobiotic amines and has important functions in the metabolism of neuroactive and vasoactive amines in the central nervous system and peripheral tissues. Preferentially oxidizes serotonin. Also catalyzes the oxidative deamination of kynuramine to 3-(2-aminophenyl)-3-oxopropanal that can spontaneously condense to 4-hydroxyquinoline. This is Amine oxidase [flavin-containing] A from Mus musculus (Mouse).